A 481-amino-acid polypeptide reads, in one-letter code: NADH-quinone oxidoreductase subunit N (481 aa).

13 helical membrane-spanning segments follow: residues 9–29 (MLPE…GIVV), 39–59 (AVSM…DHVA), 76–96 (CISR…FLCA), 104–124 (FSVV…AGHF), 158–178 (FFIL…LVYG), 205–225 (AFVL…MWAV), 232–252 (PMAA…LLLA), 265–285 (ILYG…LGAL), 293–313 (LLAY…VLHG), 318–338 (AIFH…SVLL), 359–379 (FVAF…PFLG), 399–419 (VAFP…FYCF), and 443–463 (LGLT…LFLA).

It belongs to the complex I subunit 2 family. As to quaternary structure, NDH-1 is composed of 14 different subunits. Subunits NuoA, H, J, K, L, M, N constitute the membrane sector of the complex.

It is found in the cell inner membrane. It carries out the reaction a quinone + NADH + 5 H(+)(in) = a quinol + NAD(+) + 4 H(+)(out). NDH-1 shuttles electrons from NADH, via FMN and iron-sulfur (Fe-S) centers, to quinones in the respiratory chain. The immediate electron acceptor for the enzyme in this species is believed to be ubiquinone. Couples the redox reaction to proton translocation (for every two electrons transferred, four hydrogen ions are translocated across the cytoplasmic membrane), and thus conserves the redox energy in a proton gradient. The protein is NADH-quinone oxidoreductase subunit N of Anaplasma marginale (strain Florida).